The chain runs to 216 residues: Guanylate kinase (216 aa).

Residues 11-189 (GVLIVISGPS…AVKKIEAILL (179 aa)) form the Guanylate kinase-like domain. 18–25 (GPSGAGKG) contributes to the ATP binding site.

The protein belongs to the guanylate kinase family.

The protein localises to the cytoplasm. It carries out the reaction GMP + ATP = GDP + ADP. Essential for recycling GMP and indirectly, cGMP. The protein is Guanylate kinase of Clostridium perfringens (strain ATCC 13124 / DSM 756 / JCM 1290 / NCIMB 6125 / NCTC 8237 / Type A).